The primary structure comprises 328 residues: tRNA U34 carboxymethyltransferase (328 aa).

Carboxy-S-adenosyl-L-methionine contacts are provided by residues Lys91, Trp105, Lys110, Gly130, 152-154 (DPS), Met196, Tyr200, and Arg315.

This sequence belongs to the class I-like SAM-binding methyltransferase superfamily. CmoB family. Homotetramer.

The enzyme catalyses carboxy-S-adenosyl-L-methionine + 5-hydroxyuridine(34) in tRNA = 5-carboxymethoxyuridine(34) in tRNA + S-adenosyl-L-homocysteine + H(+). Functionally, catalyzes carboxymethyl transfer from carboxy-S-adenosyl-L-methionine (Cx-SAM) to 5-hydroxyuridine (ho5U) to form 5-carboxymethoxyuridine (cmo5U) at position 34 in tRNAs. This Psychromonas ingrahamii (strain DSM 17664 / CCUG 51855 / 37) protein is tRNA U34 carboxymethyltransferase.